Here is a 211-residue protein sequence, read N- to C-terminus: uncharacterized protein (211 aa).

Helical transmembrane passes span 22–42 (FINFVRIAICIVMVWIGGLKV), 111–131 (IIGATIVTVGLLTLSGIWFPV), and 133–153 (GMAGGLLTFGMSIVTLSFMIT).

This sequence to E.coli YkgB. To H.influenzae HI_0219.

It is found in the cell membrane. This is an uncharacterized protein from Mannheimia haemolytica (Pasteurella haemolytica).